Reading from the N-terminus, the 454-residue chain is Pup--protein ligase (454 aa).

Position 9 (Glu-9) interacts with Mg(2+). Arg-53 lines the ATP pocket. Tyr-55 is a binding site for Mg(2+). Asp-57 acts as the Proton acceptor in catalysis. Residue Glu-63 coordinates Mg(2+). ATP is bound by residues Thr-66 and Trp-420.

This sequence belongs to the Pup ligase/Pup deamidase family. Pup-conjugating enzyme subfamily.

The enzyme catalyses ATP + [prokaryotic ubiquitin-like protein]-L-glutamate + [protein]-L-lysine = ADP + phosphate + N(6)-([prokaryotic ubiquitin-like protein]-gamma-L-glutamyl)-[protein]-L-lysine.. It functions in the pathway protein degradation; proteasomal Pup-dependent pathway. It participates in protein modification; protein pupylation. Its function is as follows. Catalyzes the covalent attachment of the prokaryotic ubiquitin-like protein modifier Pup to the proteasomal substrate proteins, thereby targeting them for proteasomal degradation. This tagging system is termed pupylation. The ligation reaction involves the side-chain carboxylate of the C-terminal glutamate of Pup and the side-chain amino group of a substrate lysine. In Arthrobacter sp. (strain FB24), this protein is Pup--protein ligase.